The primary structure comprises 448 residues: MGKHYIPNSAHKEEMLKEIGFSSIEELFADVPEGFIREFNVPEGKSEYEVFMEMNEILSKNKTVLEMPTFLGAGTYFHYVPAHVKYLIERSEFLTSYTPYQAEISQGMLQALFEYQSLIAELVGLPVVNSSMYDWGSALGEAALMTVRLHRGKRLKFVVPKHTHPERMQVLKTYTRGANLEIVEVKWNDRGQVDLEDLKEKVNDAAGVYVEIPNFFGLLEENIQEIGEIAHEAGAYFVVGVDPTILGVVEAPGELGADIVVGEASYFGSPMNFGGPRAGIFATRNDPKFIRQMPGRIIGMTKDAEGKRAFVMTLQTREQHIRRAKATSNICSNEALVAVAAAIHIASLGPKGMQELGEVILKNTAYLKKRLSEVAEIPFDGVNFKDVLVKFEKPYQEIHEHLLQKNIHGGYYVKPHFPELGESALFAATETTRKEWIDALIDALREVL.

Belongs to the GcvP family. N-terminal subunit subfamily. As to quaternary structure, the glycine cleavage system is composed of four proteins: P, T, L and H. In this organism, the P 'protein' is a heterodimer of two subunits.

It catalyses the reaction N(6)-[(R)-lipoyl]-L-lysyl-[glycine-cleavage complex H protein] + glycine + H(+) = N(6)-[(R)-S(8)-aminomethyldihydrolipoyl]-L-lysyl-[glycine-cleavage complex H protein] + CO2. In terms of biological role, the glycine cleavage system catalyzes the degradation of glycine. The P protein binds the alpha-amino group of glycine through its pyridoxal phosphate cofactor; CO(2) is released and the remaining methylamine moiety is then transferred to the lipoamide cofactor of the H protein. In Pyrococcus furiosus (strain ATCC 43587 / DSM 3638 / JCM 8422 / Vc1), this protein is Probable glycine dehydrogenase (decarboxylating) subunit 1.